A 414-amino-acid polypeptide reads, in one-letter code: Protein phosphatase 2C homolog 3 (414 aa).

A PPM-type phosphatase domain is found at 23-288; the sequence is LYGLSSMQGW…DNMTVCIVAL (266 aa). The Mn(2+) site is built by Asp-62, Gly-63, Asp-230, and Asp-279. 2 disordered regions span residues 313–368 and 380–414; these read APPE…TNGS and FPHKAEEENSSSETDIVNSNKDVADDHKEAVSAAD. Basic and acidic residues predominate over residues 350–363; that stretch reads GYDKDANENSKEDD. The span at 390–400 shows a compositional bias: polar residues; it reads SSETDIVNSNK. Positions 401–414 are enriched in basic and acidic residues; it reads DVADDHKEAVSAAD.

The protein belongs to the PP2C family. In terms of assembly, monomer. Mg(2+) is required as a cofactor. It depends on Mn(2+) as a cofactor.

It is found in the cytoplasm. The protein resides in the nucleus. It catalyses the reaction O-phospho-L-seryl-[protein] + H2O = L-seryl-[protein] + phosphate. The enzyme catalyses O-phospho-L-threonyl-[protein] + H2O = L-threonyl-[protein] + phosphate. Dephosphorylating regulator for many key proteins. Has an important role in osmotic stability and cell shape control. It may negatively regulate the osmosensing signal transmitted through wis1 map kinase. In Schizosaccharomyces pombe (strain 972 / ATCC 24843) (Fission yeast), this protein is Protein phosphatase 2C homolog 3 (ptc3).